We begin with the raw amino-acid sequence, 759 residues long: Na(+)/H(+) exchanger beta (759 aa).

The Cytoplasmic segment spans residues 1–14; sequence MPAFSCAFPGCRRD. The helical transmembrane segment at 15–34 threads the bilayer; the sequence is LLVIVLVVFVGIGLPIEASA. Residues 35-75 lie on the Extracellular side of the membrane; it reads PAYQSHGTEGSHLTNITNTKKAFPVLAVNYEHVRKPFEIAL. A glycan (N-linked (GlcNAc...) asparagine) is linked at Asn-49. The chain crosses the membrane as a helical span at residues 76 to 95; sequence WILLALLMKLGFHLIPRLSA. Residues 96 to 97 are Cytoplasmic-facing; the sequence is VV. The helical transmembrane segment at 98 to 117 threads the bilayer; sequence PESCLLIVVGLLVGGLIKVI. Residues 118–122 are Extracellular-facing; that stretch reads GEEPP. A helical transmembrane segment spans residues 123-142; sequence VLDSQLFFLCLLPPIILDAG. At 143–149 the chain is on the cytoplasmic side; that stretch reads YFLPIRP. The helical transmembrane segment at 150 to 169 threads the bilayer; that stretch reads FTENVGTILVFAVIGTLWNA. At 170–195 the chain is on the extracellular side; the sequence is FFMGGLLYALCQIESVGLSGVDLLAC. Residues 196–214 form a helical membrane-spanning segment; it reads LLFGSIVSAVDPVAVLAVF. Residues 215 to 225 lie on the Cytoplasmic side of the membrane; the sequence is EEIHINELVHI. A helical transmembrane segment spans residues 226–244; the sequence is LVFGESLLNDAVTVVLYNL. At 245-261 the chain is on the extracellular side; sequence FEEFSKVGTVTVLDVFL. The chain crosses the membrane as a helical span at residues 262–282; sequence GVVCFFVVSLGGVLVGAIYGF. Residues 283 to 311 are Cytoplasmic-facing; it reads LAAFTSRFTSHTRVIEPLFVFLYSYMAYL. Residues 312 to 330 traverse the membrane as a helical segment; the sequence is SSEMFHLSGIMALIACGVV. Over 331-352 the chain is Extracellular; the sequence is MRPYVEANISHKSYTTIKYFLK. The N-linked (GlcNAc...) asparagine glycan is linked to Asn-338. Residues 353–372 form a helical membrane-spanning segment; it reads MWSSVSETLIFIFLGVSTVA. The Cytoplasmic portion of the chain corresponds to 373–376; sequence GPHA. The helical transmembrane segment at 377-398 threads the bilayer; that stretch reads WNWTFVITTVILCLVSRVLGVI. Residues 399–446 lie on the Extracellular side of the membrane; sequence GLTFIINKFRIVKLTKKDQFIVAYGGLRGAIAFSLGYLLSNSHQMRNL. Residues 447–467 form a helical membrane-spanning segment; the sequence is FLTAIITVIFFTVFVQGMTIR. Residues 468–759 are Cytoplasmic-facing; sequence PLVELLAVKK…KEDDDPFMSC (292 aa). Residues Ser-641 and Ser-648 each carry the phosphoserine; by PKA modification. Residues 681–759 form a disordered region; the sequence is FPTVHFEQPS…KEDDDPFMSC (79 aa). The span at 707–719 shows a compositional bias: basic and acidic residues; that stretch reads VPKRPSLKADIEG.

Belongs to the monovalent cation:proton antiporter 1 (CPA1) transporter (TC 2.A.36) family. Activated by cAMP, protein kinase A and protein kinase C.

It is found in the basolateral cell membrane. Functionally, involved in pH regulation to eliminate acids generated by active metabolism or to counter adverse environmental conditions. Major proton extruding system driven by the inward sodium ion chemical gradient. In Oncorhynchus mykiss (Rainbow trout), this protein is Na(+)/H(+) exchanger beta.